A 191-amino-acid polypeptide reads, in one-letter code: Ribonuclease MC (191 aa).

An RNA-binding site is contributed by Gln-9. Cysteines 15 and 23 form a disulfide. Residues His-34, 72–73 (NV), Arg-75, Phe-81, 84–85 (HE), and 88–89 (KH) contribute to the RNA site. Catalysis depends on His-34, which acts as the Proton donor. 3 cysteine pairs are disulfide-bonded: Cys-48–Cys-92, Cys-152–Cys-185, and Cys-169–Cys-180. Glu-85 is a catalytic residue. His-89 functions as the Proton acceptor in the catalytic mechanism.

Belongs to the RNase T2 family.

It catalyses the reaction a ribonucleotidyl-ribonucleotide-RNA + H2O = a 3'-end 3'-phospho-ribonucleotide-RNA + a 5'-end dephospho-ribonucleoside-RNA + H(+). In terms of biological role, ribonuclease cleaving preferentially the 5'-side of uridine. The sequence is that of Ribonuclease MC from Momordica charantia (Bitter gourd).